The primary structure comprises 403 residues: 26S proteasome regulatory subunit 6B homolog (403 aa).

Met-1 bears the N-acetylmethionine mark. Gly-191 to Thr-198 is an ATP binding site.

It belongs to the AAA ATPase family.

Its subcellular location is the cytoplasm. The protein resides in the nucleus. In terms of biological role, the 26S proteasome is involved in the ATP-dependent degradation of ubiquitinated proteins. The regulatory (or ATPase) complex confers ATP dependency and substrate specificity to the 26S complex. This Dictyostelium discoideum (Social amoeba) protein is 26S proteasome regulatory subunit 6B homolog (psmC4).